A 128-amino-acid chain; its full sequence is Ribonuclease pancreatic (128 aa).

Basic and acidic residues predominate over residues 1–13 (GESRAEKFQRQHM). Residues 1–24 (GESRAEKFQRQHMDSGSSPSSSST) form a disordered region. Positions 7 and 10 each coordinate substrate. Catalysis depends on histidine 12, which acts as the Proton acceptor. Intrachain disulfides connect cysteine 26–cysteine 84, cysteine 40–cysteine 95, cysteine 58–cysteine 110, and cysteine 65–cysteine 72. N-linked (GlcNAc...) asparagine glycosylation occurs at asparagine 34. Residues 41 to 45 (KSVNT), lysine 66, and arginine 85 each bind substrate. Residue histidine 119 is the Proton donor of the active site.

Belongs to the pancreatic ribonuclease family. As to quaternary structure, monomer. Interacts with and forms tight 1:1 complexes with RNH1. Dimerization of two such complexes may occur. Interaction with RNH1 inhibits this protein. As to expression, pancreas and other tissues and body fluids (indicating it may have other physiological functions besides its role in digestion).

The protein localises to the secreted. It catalyses the reaction an [RNA] containing cytidine + H2O = an [RNA]-3'-cytidine-3'-phosphate + a 5'-hydroxy-ribonucleotide-3'-[RNA].. The catalysed reaction is an [RNA] containing uridine + H2O = an [RNA]-3'-uridine-3'-phosphate + a 5'-hydroxy-ribonucleotide-3'-[RNA].. Its function is as follows. Endonuclease that catalyzes the cleavage of RNA on the 3' side of pyrimidine nucleotides. Acts on single-stranded and double-stranded RNA. The sequence is that of Ribonuclease pancreatic (RNASE1) from Semnopithecus entellus (Northern plains gray langur).